A 460-amino-acid polypeptide reads, in one-letter code: UDP-N-acetylmuramoylalanine--D-glutamate ligase (460 aa).

ATP is bound at residue 120-126 (GSNGKTT).

Belongs to the MurCDEF family.

Its subcellular location is the cytoplasm. The catalysed reaction is UDP-N-acetyl-alpha-D-muramoyl-L-alanine + D-glutamate + ATP = UDP-N-acetyl-alpha-D-muramoyl-L-alanyl-D-glutamate + ADP + phosphate + H(+). It functions in the pathway cell wall biogenesis; peptidoglycan biosynthesis. Its function is as follows. Cell wall formation. Catalyzes the addition of glutamate to the nucleotide precursor UDP-N-acetylmuramoyl-L-alanine (UMA). This chain is UDP-N-acetylmuramoylalanine--D-glutamate ligase, found in Lactobacillus delbrueckii subsp. bulgaricus (strain ATCC 11842 / DSM 20081 / BCRC 10696 / JCM 1002 / NBRC 13953 / NCIMB 11778 / NCTC 12712 / WDCM 00102 / Lb 14).